The sequence spans 409 residues: Spermatogenesis-associated protein 2-like protein (409 aa).

Disordered stretches follow at residues 233 to 257 (EDEGSDEASLYGGPSPGPDSPTSEL), 270 to 299 (LWGAGGGPWEPAEVSSPTSGASEEEEPQPE), and 313 to 337 (RPGDLAPPHAPRSPEQASPPPIPEP).

This sequence belongs to the SPATA2 family.

This is Spermatogenesis-associated protein 2-like protein (SPATA2L) from Bos taurus (Bovine).